Here is a 229-residue protein sequence, read N- to C-terminus: Lantibiotic transport ATP-binding protein SrtF (229 aa).

An ABC transporter domain is found at 2–225 (LKIQNLKKSY…EELFNNQILF (224 aa)). Position 34–41 (34–41 (GPNGAGKS)) interacts with ATP.

It belongs to the ABC transporter superfamily.

Implicated in the export process of the lantibiotic SrtA. In Streptococcus pyogenes serotype M1, this protein is Lantibiotic transport ATP-binding protein SrtF (srtF).